The chain runs to 146 residues: 3-dehydroquinate dehydratase (146 aa).

The Proton acceptor role is filled by Tyr-22. Residues Asn-73, His-79, and Asp-86 each coordinate substrate. The Proton donor role is filled by His-99. Residues 100-101 (LS) and Arg-110 contribute to the substrate site.

The protein belongs to the type-II 3-dehydroquinase family. As to quaternary structure, homododecamer.

The enzyme catalyses 3-dehydroquinate = 3-dehydroshikimate + H2O. Its pathway is metabolic intermediate biosynthesis; chorismate biosynthesis; chorismate from D-erythrose 4-phosphate and phosphoenolpyruvate: step 3/7. Catalyzes a trans-dehydration via an enolate intermediate. This is 3-dehydroquinate dehydratase from Parasynechococcus marenigrum (strain WH8102).